A 131-amino-acid chain; its full sequence is uncharacterized protein (131 aa).

The segment at 13–32 is disordered; the sequence is TYSPLPEPPPTPALGGQRGP.

This is an uncharacterized protein from Homo sapiens (Human).